The chain runs to 543 residues: CTP synthase (543 aa).

The tract at residues 1-265 (MTRYIFVTGG…DDFVVERFGL (265 aa)) is amidoligase domain. Ser-13 contacts CTP. Ser-13 contributes to the UTP binding site. ATP-binding positions include 14–19 (SLGKGI) and Asp-71. Asp-71 and Glu-139 together coordinate Mg(2+). Residues 146 to 148 (DIE), 186 to 191 (KTKPTQ), and Lys-222 each bind CTP. UTP contacts are provided by residues 186 to 191 (KTKPTQ) and Lys-222. Residues 290–541 (TIAMVGKYME…VKAALAQHQK (252 aa)) enclose the Glutamine amidotransferase type-1 domain. Gly-351 is an L-glutamine binding site. The Nucleophile; for glutamine hydrolysis role is filled by Cys-378. L-glutamine is bound by residues 379 to 382 (LGMQ), Glu-402, and Arg-469. Residues His-514 and Glu-516 contribute to the active site.

It belongs to the CTP synthase family. Homotetramer.

The enzyme catalyses UTP + L-glutamine + ATP + H2O = CTP + L-glutamate + ADP + phosphate + 2 H(+). It carries out the reaction L-glutamine + H2O = L-glutamate + NH4(+). It catalyses the reaction UTP + NH4(+) + ATP = CTP + ADP + phosphate + 2 H(+). It participates in pyrimidine metabolism; CTP biosynthesis via de novo pathway; CTP from UDP: step 2/2. Its activity is regulated as follows. Allosterically activated by GTP, when glutamine is the substrate; GTP has no effect on the reaction when ammonia is the substrate. The allosteric effector GTP functions by stabilizing the protein conformation that binds the tetrahedral intermediate(s) formed during glutamine hydrolysis. Inhibited by the product CTP, via allosteric rather than competitive inhibition. Its function is as follows. Catalyzes the ATP-dependent amination of UTP to CTP with either L-glutamine or ammonia as the source of nitrogen. Regulates intracellular CTP levels through interactions with the four ribonucleotide triphosphates. This is CTP synthase from Pseudomonas syringae pv. tomato (strain ATCC BAA-871 / DC3000).